An 814-amino-acid polypeptide reads, in one-letter code: Origin of replication complex subunit 1 (814 aa).

Residues 1 to 15 (MDLSATPSRSKSGLR) are compositionally biased toward polar residues. The disordered stretch occupies residues 1-127 (MDLSATPSRS…PKKPKKRAYY (127 aa)). Composition is skewed to low complexity over residues 51-62 (APMSPVTPSSVR) and 69-80 (ETPTKVTSETPV). Residues 105 to 112 (PKRQRQRQ) carry the Nuclear localization signal motif. Over residues 108–127 (QRQRQRQRQQPKKPKKRAYY) the composition is skewed to basic residues. The histone H3 binding stretch occupies residues 157–181 (DPEAEECRVCFRAGAAVMVECDVCL). Residues 160-209 (AEECRVCFRAGAAVMVECDVCLGGFHLRCVRPPLRRVPEGDWACPYCEAE) form a PHD-type zinc finger. Zn(2+) contacts are provided by cysteine 163, cysteine 166, cysteine 177, cysteine 180, histidine 185, and cysteine 188. Positions 197-201 (PEGDW) are histone H3 binding. Residues cysteine 203 and cysteine 206 each coordinate Zn(2+). In terms of domain architecture, BAH spans 218 to 335 (PKPPEGKRIV…IHWHNFKRLA (118 aa)). Residues 310 to 315 (ASDQGD) are histone H3 binding. Acidic residues-rich tracts occupy residues 339-349 (DEPETKEDPGD) and 360-373 (SDSDEDSEYDEEEE). Residues 339–384 (DEPETKEDPGDEPYNAGNDYVSDSDEDSEYDEEEEPTKCSSARTHQ) are disordered. Residues 433-804 (PKSLPCRDKE…DDVTFALKES (372 aa)) form a necessary and sufficient for ORC complex assembly region. Residues 468–475 (GVPGTGKT) and 468–476 (GVPGTGKTM) each bind ATP. Mg(2+)-binding residues include aspartate 558 and glutamate 559. Residues glutamate 559, asparagine 592, and arginine 657 each coordinate ATP.

This sequence belongs to the ORC1 family. Component of the origin recognition complex (ORC) composed of at least ORC1, ORC2, ORC3, ORC4, ORC5 and ORC6. ORC is regulated in a cell-cycle and development dependent manner. It is sequentially assembled at the exit from anaphase of mitosis and disassembled as cells enter S phase. Binds unmodified and methylated histone H3. As to expression, expressed strongly in root tips and shoot apical meristem (SAM), and weakly in young leaves. Not detected in mature leaves.

The protein localises to the nucleus. Essential protein. Component of the origin recognition complex (ORC) that binds origins of replication. It has a role in both chromosomal replication and mating type transcriptional silencing. Binds to the ARS consensus sequence (ACS) of origins of replication. H3K4me3 effector that positively regulates the transcription of a subset of genes. Required for cell proliferation. This Oryza sativa subsp. japonica (Rice) protein is Origin of replication complex subunit 1.